The sequence spans 225 residues: Holliday junction branch migration complex subunit RuvA (225 aa).

A domain I region spans residues 1–71; sequence MISWISGELV…EDSDLLFGFS (71 aa). The tract at residues 72–150 is domain II; the sequence is SKDQKNFFIE…NELKIQEEKS (79 aa). Residues 151-161 are flexible linker; the sequence is KDEFHIKDNKI. Residues 161-225 are domain III; that stretch reads INKIVSDIEL…LDNDSSNIVR (65 aa).

It belongs to the RuvA family. In terms of assembly, homotetramer. Forms an RuvA(8)-RuvB(12)-Holliday junction (HJ) complex. HJ DNA is sandwiched between 2 RuvA tetramers; dsDNA enters through RuvA and exits via RuvB. An RuvB hexamer assembles on each DNA strand where it exits the tetramer. Each RuvB hexamer is contacted by two RuvA subunits (via domain III) on 2 adjacent RuvB subunits; this complex drives branch migration. In the full resolvosome a probable DNA-RuvA(4)-RuvB(12)-RuvC(2) complex forms which resolves the HJ.

It localises to the cytoplasm. Its function is as follows. The RuvA-RuvB-RuvC complex processes Holliday junction (HJ) DNA during genetic recombination and DNA repair, while the RuvA-RuvB complex plays an important role in the rescue of blocked DNA replication forks via replication fork reversal (RFR). RuvA specifically binds to HJ cruciform DNA, conferring on it an open structure. The RuvB hexamer acts as an ATP-dependent pump, pulling dsDNA into and through the RuvAB complex. HJ branch migration allows RuvC to scan DNA until it finds its consensus sequence, where it cleaves and resolves the cruciform DNA. This is Holliday junction branch migration complex subunit RuvA from Prochlorococcus marinus (strain MIT 9312).